The primary structure comprises 370 residues: Elongation factor Ts, mitochondrial (370 aa).

The transit peptide at 1–29 (MALLSAAPRALRLPRRLPLGAALPALRAL) directs the protein to the mitochondrion.

It belongs to the EF-Ts family.

Its subcellular location is the mitochondrion. Its function is as follows. Associates with the EF-Tu.GDP complex and induces the exchange of GDP to GTP. It remains bound to the aminoacyl-tRNA.EF-Tu.GTP complex up to the GTP hydrolysis stage on the ribosome. The polypeptide is Elongation factor Ts, mitochondrial (Cryptococcus neoformans var. neoformans serotype D (strain B-3501A) (Filobasidiella neoformans)).